A 351-amino-acid polypeptide reads, in one-letter code: Probable dual-specificity RNA methyltransferase RlmN (351 aa).

The Proton acceptor role is filled by Glu102. The 230-residue stretch at 110–339 folds into the Radical SAM core domain; it reads DGGRKTICIS…ILNRRSPGKD (230 aa). Cys117 and Cys344 are oxidised to a cystine. 3 residues coordinate [4Fe-4S] cluster: Cys124, Cys128, and Cys131. S-adenosyl-L-methionine contacts are provided by residues 171–172, Ser203, 226–228, and Asn302; these read GE and SLN. Residue Cys344 is the S-methylcysteine intermediate of the active site.

This sequence belongs to the radical SAM superfamily. RlmN family. Requires [4Fe-4S] cluster as cofactor.

It localises to the cytoplasm. It catalyses the reaction adenosine(2503) in 23S rRNA + 2 reduced [2Fe-2S]-[ferredoxin] + 2 S-adenosyl-L-methionine = 2-methyladenosine(2503) in 23S rRNA + 5'-deoxyadenosine + L-methionine + 2 oxidized [2Fe-2S]-[ferredoxin] + S-adenosyl-L-homocysteine. The catalysed reaction is adenosine(37) in tRNA + 2 reduced [2Fe-2S]-[ferredoxin] + 2 S-adenosyl-L-methionine = 2-methyladenosine(37) in tRNA + 5'-deoxyadenosine + L-methionine + 2 oxidized [2Fe-2S]-[ferredoxin] + S-adenosyl-L-homocysteine. Specifically methylates position 2 of adenine 2503 in 23S rRNA and position 2 of adenine 37 in tRNAs. This Leptospira borgpetersenii serovar Hardjo-bovis (strain JB197) protein is Probable dual-specificity RNA methyltransferase RlmN.